The sequence spans 380 residues: Epoxyqueuosine reductase (380 aa).

Residue Asp139 is the Proton donor of the active site. Positions 181-213 constitute a 4Fe-4S ferredoxin-type 1 domain; that stretch reads IPFEPDDPLLDSCGDCTICVDRCPTSALVGNGQ. [4Fe-4S] cluster-binding residues include Cys193, Cys196, Cys199, Cys203, Cys219, Cys245, Cys248, and Cys252. The 4Fe-4S ferredoxin-type 2 domain occupies 234–263; that stretch reads YRYKIGNRLYGCDTCQQVCPKNRGINTEQD.

This sequence belongs to the QueG family. Monomer. Requires cob(II)alamin as cofactor. [4Fe-4S] cluster is required as a cofactor.

The protein resides in the cytoplasm. The enzyme catalyses epoxyqueuosine(34) in tRNA + AH2 = queuosine(34) in tRNA + A + H2O. It participates in tRNA modification; tRNA-queuosine biosynthesis. In terms of biological role, catalyzes the conversion of epoxyqueuosine (oQ) to queuosine (Q), which is a hypermodified base found in the wobble positions of tRNA(Asp), tRNA(Asn), tRNA(His) and tRNA(Tyr). In Staphylococcus aureus (strain NCTC 8325 / PS 47), this protein is Epoxyqueuosine reductase.